Here is a 516-residue protein sequence, read N- to C-terminus: Gamma-aminobutyrate transaminase 1, mitochondrial (516 aa).

The N-terminal 47 residues, 1–47, are a transit peptide targeting the mitochondrion; the sequence is MVIARGLLRSNASSSSSQAINLLKYVTSTGSLQGHTQNLCDASTRHF. Position 171-172 (171-172) interacts with pyridoxal 5'-phosphate; it reads GS. Y204 contacts substrate. D311 provides a ligand contact to pyridoxal 5'-phosphate. Substrate is bound at residue K340. K340 carries the N6-(pyridoxal phosphate)lysine modification.

It belongs to the class-III pyridoxal-phosphate-dependent aminotransferase family. Expressed in roots, stems and panicles.

It is found in the mitochondrion. The enzyme catalyses 4-aminobutanoate + pyruvate = succinate semialdehyde + L-alanine. It carries out the reaction 4-aminobutanoate + glyoxylate = succinate semialdehyde + glycine. Its function is as follows. Transaminase that degrades gamma-amino butyric acid (GABA) and uses pyruvate as amino-group acceptor, but not 2-oxoglutarate. Not involved in the interaction with blast fungus. This chain is Gamma-aminobutyrate transaminase 1, mitochondrial (OSL2), found in Oryza sativa subsp. japonica (Rice).